We begin with the raw amino-acid sequence, 381 residues long: Lipid-A-disaccharide synthase (381 aa).

This sequence belongs to the LpxB family.

The catalysed reaction is a lipid X + a UDP-2-N,3-O-bis[(3R)-3-hydroxyacyl]-alpha-D-glucosamine = a lipid A disaccharide + UDP + H(+). It participates in bacterial outer membrane biogenesis; LPS lipid A biosynthesis. Functionally, condensation of UDP-2,3-diacylglucosamine and 2,3-diacylglucosamine-1-phosphate to form lipid A disaccharide, a precursor of lipid A, a phosphorylated glycolipid that anchors the lipopolysaccharide to the outer membrane of the cell. The protein is Lipid-A-disaccharide synthase of Psychromonas ingrahamii (strain DSM 17664 / CCUG 51855 / 37).